The primary structure comprises 279 residues: Tryptophan 2,3-dioxygenase (279 aa).

Substrate contacts are provided by residues 48 to 52 (FIIQH), Tyr110, and Arg114. His237 contacts heme. Position 251 (Thr251) interacts with substrate.

The protein belongs to the tryptophan 2,3-dioxygenase family. Homotetramer. The cofactor is heme.

The catalysed reaction is L-tryptophan + O2 = N-formyl-L-kynurenine. It participates in amino-acid degradation; L-tryptophan degradation via kynurenine pathway; L-kynurenine from L-tryptophan: step 1/2. Its function is as follows. Heme-dependent dioxygenase that catalyzes the oxidative cleavage of the L-tryptophan (L-Trp) pyrrole ring and converts L-tryptophan to N-formyl-L-kynurenine. Catalyzes the oxidative cleavage of the indole moiety. In Bradyrhizobium diazoefficiens (strain JCM 10833 / BCRC 13528 / IAM 13628 / NBRC 14792 / USDA 110), this protein is Tryptophan 2,3-dioxygenase.